The primary structure comprises 1227 residues: ATP-dependent helicase/nuclease subunit A (1227 aa).

The UvrD-like helicase ATP-binding domain occupies Gln37 to Gln503. Ala58 to Thr65 serves as a coordination point for ATP. Residues Ser532–Gly816 form the UvrD-like helicase C-terminal domain.

This sequence belongs to the helicase family. AddA subfamily. In terms of assembly, heterodimer of AddA and AddB/RexB. It depends on Mg(2+) as a cofactor.

The catalysed reaction is Couples ATP hydrolysis with the unwinding of duplex DNA by translocating in the 3'-5' direction.. It catalyses the reaction ATP + H2O = ADP + phosphate + H(+). Functionally, the heterodimer acts as both an ATP-dependent DNA helicase and an ATP-dependent, dual-direction single-stranded exonuclease. Recognizes the chi site generating a DNA molecule suitable for the initiation of homologous recombination. The AddA nuclease domain is required for chi fragment generation; this subunit has the helicase and 3' -&gt; 5' nuclease activities. This Streptococcus suis (strain 98HAH33) protein is ATP-dependent helicase/nuclease subunit A.